Consider the following 181-residue polypeptide: GTP cyclohydrolase 1 2 (181 aa).

Belongs to the GTP cyclohydrolase I family. In terms of assembly, homomer.

It catalyses the reaction GTP + H2O = 7,8-dihydroneopterin 3'-triphosphate + formate + H(+). Its pathway is cofactor biosynthesis; 7,8-dihydroneopterin triphosphate biosynthesis; 7,8-dihydroneopterin triphosphate from GTP: step 1/1. This chain is GTP cyclohydrolase 1 2, found in Pseudomonas syringae pv. tomato (strain ATCC BAA-871 / DC3000).